The sequence spans 522 residues: MAEFPEPGTVNPDSDLSNGRAEKPEIDTSAPFESVREAATRFGGFGFWRPSLNKLPDASQENIQEPDIMGLKAQAFELQRELIVKERETLEVLKELEATKATVLKLQQRNEAYEEDTLREEVDSHIKPAGVVLKDLSQAKMNLCKIASIRESVEQLKNKLNEERAALEKTRERLMEKSLKVFSLEEEEVRVRFAKEGQTGEKDLGMLNEVQRLSRQAQEVKKTGENAELEVVKAMAETESTRDKIRTAKIRLVAARKMKEAAREAEAVAIAEIEAVTGSMNVGKAEAVTISAEEYSVLARSARDAEEEARKRVEDAMSRVEEANVSKKDVLKKVDEAAQEIETSKRVLEEAVERVDAANASKIEAEEALRKWRSENGQRRRLSSSVNNTSKFKSRRETTTRLMDVNGLHLTYDVVDGSSSSSTVPVLKPTMSIGQILSKKLLLAEDSDMNVANERRKMSLGQMLAKNSSSDKTVSKRSEGKENEKRTKTRKRKSFGFAKISVLLNKESKNKKKKKKIALNLR.

Residues 1-32 (MAEFPEPGTVNPDSDLSNGRAEKPEIDTSAPF) are disordered. Coiled coils occupy residues 77-264 (ELQR…AARE) and 299-376 (ARSA…RSEN). Disordered stretches follow at residues 374-397 (SENGQRRRLSSSVNNTSKFKSRRE) and 458-493 (MSLGQMLAKNSSSDKTVSKRSEGKENEKRTKTRKRK). Residues 473–486 (TVSKRSEGKENEKR) show a composition bias toward basic and acidic residues.

This sequence belongs to the WEB family.

This chain is WEB family protein At2g38370, found in Arabidopsis thaliana (Mouse-ear cress).